The chain runs to 331 residues: GTPase Obg (331 aa).

An Obg domain is found at 1-159 (MQFIDQARIA…RELQLELKLL (159 aa)). One can recognise an OBG-type G domain in the interval 160–328 (AEVGLVGLPN…LLQQVWQELG (169 aa)). Residues 166-173 (GLPNAGKS), 191-195 (FTTLV), 213-216 (DIPG), 280-283 (SKSE), and 309-311 (SAV) each bind GTP. The Mg(2+) site is built by serine 173 and threonine 193.

This sequence belongs to the TRAFAC class OBG-HflX-like GTPase superfamily. OBG GTPase family. As to quaternary structure, monomer. It depends on Mg(2+) as a cofactor.

The protein localises to the cytoplasm. An essential GTPase which binds GTP, GDP and possibly (p)ppGpp with moderate affinity, with high nucleotide exchange rates and a fairly low GTP hydrolysis rate. Plays a role in control of the cell cycle, stress response, ribosome biogenesis and in those bacteria that undergo differentiation, in morphogenesis control. The protein is GTPase Obg of Synechococcus sp. (strain RCC307).